The sequence spans 202 residues: Guanylate kinase (202 aa).

Residues Gly3–Arg181 enclose the Guanylate kinase-like domain. Ala10–Thr17 lines the ATP pocket.

The protein belongs to the guanylate kinase family.

It localises to the cytoplasm. It carries out the reaction GMP + ATP = GDP + ADP. Functionally, essential for recycling GMP and indirectly, cGMP. The protein is Guanylate kinase of Dechloromonas aromatica (strain RCB).